The chain runs to 215 residues: MSAHTTAQSAQYNQSATQAALVPMVVEQSARGERSFDIFSRLLRERVIFLTGQVEDHMANLIVAQLLFLEAENPDKDIHLYINSPGGSVSAGLAIFDTMNFIKPEVSTICMGGAYSMGSFLLAAGEKGKRYALANARVMIHQPSGGAQGQATDIEINAREILKTRARLNEILAERTGQPVDKIEKDVERDYWLDAKEAKEYGLIDEVLERRPASL.

The active-site Nucleophile is the serine 116. Residue histidine 141 is part of the active site.

It belongs to the peptidase S14 family. In terms of assembly, fourteen ClpP subunits assemble into 2 heptameric rings which stack back to back to give a disk-like structure with a central cavity, resembling the structure of eukaryotic proteasomes.

It localises to the cytoplasm. It carries out the reaction Hydrolysis of proteins to small peptides in the presence of ATP and magnesium. alpha-casein is the usual test substrate. In the absence of ATP, only oligopeptides shorter than five residues are hydrolyzed (such as succinyl-Leu-Tyr-|-NHMec, and Leu-Tyr-Leu-|-Tyr-Trp, in which cleavage of the -Tyr-|-Leu- and -Tyr-|-Trp bonds also occurs).. Cleaves peptides in various proteins in a process that requires ATP hydrolysis. Has a chymotrypsin-like activity. Plays a major role in the degradation of misfolded proteins. The chain is ATP-dependent Clp protease proteolytic subunit from Psychrobacter cryohalolentis (strain ATCC BAA-1226 / DSM 17306 / VKM B-2378 / K5).